Consider the following 323-residue polypeptide: Serine/threonine-protein phosphatase PP1-gamma catalytic subunit (323 aa).

The Mn(2+) site is built by D64, H66, D92, and N124. The Proton donor role is filled by H125. Residues H173 and H248 each contribute to the Mn(2+) site. The disordered stretch occupies residues E300–K323.

Belongs to the PPP phosphatase family. PP-1 subfamily. In terms of assembly, PP1 comprises a catalytic subunit, ppp1c1, ppp1cb or ppp1cc, which is folded into its native form by inhibitor 2 and glycogen synthetase kinase 3, and then is complexed to one or several targeting or regulatory subunits. Mn(2+) serves as cofactor.

Its subcellular location is the cytoplasm. It localises to the nucleus. The protein resides in the cleavage furrow. The protein localises to the nucleolus. It is found in the nucleoplasm. Its subcellular location is the chromosome. It localises to the centromere. The protein resides in the kinetochore. The protein localises to the nucleus speckle. It is found in the midbody. Its subcellular location is the mitochondrion. It localises to the cytoskeleton. The protein resides in the microtubule organizing center. The catalysed reaction is O-phospho-L-seryl-[protein] + H2O = L-seryl-[protein] + phosphate. It carries out the reaction O-phospho-L-threonyl-[protein] + H2O = L-threonyl-[protein] + phosphate. Functionally, protein phosphatase 1 (PP1) is essential for cell division, and participates in the regulation of glycogen metabolism, muscle contractility and protein synthesis. Promotes nuclear envelope reassembly by targeting nuclear membrane vesicles to chromatin at the end of mitosis. Acts by dephosphorylating membrane proteins such as lamin B receptor (lbr) to regulate the binding of membrane proteins to chromatin. In Xenopus tropicalis (Western clawed frog), this protein is Serine/threonine-protein phosphatase PP1-gamma catalytic subunit.